We begin with the raw amino-acid sequence, 440 residues long: D-serine dehydratase (440 aa).

Lys-116 carries the post-translational modification N6-(pyridoxal phosphate)lysine.

It belongs to the serine/threonine dehydratase family. DsdA subfamily. As to quaternary structure, monomer. The cofactor is pyridoxal 5'-phosphate.

It catalyses the reaction D-serine = pyruvate + NH4(+). In Salmonella enteritidis PT4 (strain P125109), this protein is D-serine dehydratase.